The sequence spans 85 residues: MAHKKAGGSTRNGRDSESKRLGVKMYGSQVVKAGNIIVRQRGTQFHAGYGVGMGKDHTLFAKIEGVIKFEKKGEFNRRYVSIVAA.

Positions M1–L21 are disordered.

Belongs to the bacterial ribosomal protein bL27 family.

In Pseudomonas putida (strain W619), this protein is Large ribosomal subunit protein bL27.